Here is a 316-residue protein sequence, read N- to C-terminus: Melanocyte-stimulating hormone receptor (316 aa).

Residues 1 to 37 (MPMQGAHRKLLGSLNSTPTATSNLGLAANHTGAPCLE) lie on the Extracellular side of the membrane. The N-linked (GlcNAc...) asparagine glycan is linked to asparagine 29. A helical membrane pass occupies residues 38–63 (VSIPDGLFLSLGLVSLVENVLVVAAI). The Cytoplasmic portion of the chain corresponds to 64–72 (AKNRNLHSS). A helical transmembrane segment spans residues 73–93 (MYCFICCLALSDLLVSGSNML). Residues 94 to 118 (ETAVILLLEAGALATRTSVVQQLHN) are Extracellular-facing. The helical transmembrane segment at 119 to 140 (TIDVLTCSSMLCSLCFLGAIAV) threads the bilayer. At 141 to 163 (DRYISIFYALRYHSIMTLPRAQR) the chain is on the cytoplasmic side. A helical membrane pass occupies residues 164-183 (AIAAIWVASVLSSTLFITYY). Topologically, residues 184–191 (DHAAVLLC) are extracellular. The chain crosses the membrane as a helical span at residues 192–211 (LVVFFLAMLVLMAVLYVHML). At 212–240 (ARACQHAHGIIRLHKRQSPAHQGFGLRGA) the chain is on the cytoplasmic side. Residues 241 to 266 (ATLTILLGIFFLCWGPFFLHLTLVVF) form a helical membrane-spanning segment. Topologically, residues 267–279 (CPQHLTCSCIFKN) are extracellular. The helical transmembrane segment at 280–300 (FKVFLTLIICNTIIDPLIYAF) threads the bilayer. Over 301–316 (RSQELRRTLKEVLCSW) the chain is Cytoplasmic. The S-palmitoyl cysteine moiety is linked to residue cysteine 314.

The protein belongs to the G-protein coupled receptor 1 family. As to quaternary structure, interacts with MGRN1, but does not undergo MGRN1-mediated ubiquitination; this interaction competes with GNAS-binding and thus inhibits agonist-induced cAMP production. Interacts with OPN3; the interaction results in a decrease in MC1R-mediated cAMP signaling and ultimately a decrease in melanin production in melanocytes.

The protein localises to the cell membrane. In terms of biological role, receptor for MSH (alpha, beta and gamma) and ACTH. The activity of this receptor is mediated by G proteins which activate adenylate cyclase. Mediates melanogenesis, the production of eumelanin (black/brown) and phaeomelanin (red/yellow), via regulation of cAMP signaling in melanocytes. This chain is Melanocyte-stimulating hormone receptor (MC1R), found in Leontocebus fuscicollis (Brown-mantled tamarin).